Here is a 207-residue protein sequence, read N- to C-terminus: Thymidine kinase (207 aa).

ATP contacts are provided by residues 15–22 (GCMFSGKS) and 88–91 (DEIQ). Residue Glu-89 is the Proton acceptor of the active site. Zn(2+) is bound by residues Cys-145, Cys-148, Cys-183, and His-186. Basic residues predominate over residues 184 to 198 (RHHHEVPGKPKKRYN). Residues 184 to 207 (RHHHEVPGKPKKRYNHPLAGHTGE) form a disordered region.

This sequence belongs to the thymidine kinase family. In terms of assembly, homotetramer.

Its subcellular location is the cytoplasm. The catalysed reaction is thymidine + ATP = dTMP + ADP + H(+). This is Thymidine kinase from Geobacillus kaustophilus (strain HTA426).